Here is a 271-residue protein sequence, read N- to C-terminus: Indole-3-glycerol phosphate synthase (271 aa).

Belongs to the TrpC family.

It catalyses the reaction 1-(2-carboxyphenylamino)-1-deoxy-D-ribulose 5-phosphate + H(+) = (1S,2R)-1-C-(indol-3-yl)glycerol 3-phosphate + CO2 + H2O. It functions in the pathway amino-acid biosynthesis; L-tryptophan biosynthesis; L-tryptophan from chorismate: step 4/5. The polypeptide is Indole-3-glycerol phosphate synthase (Haloarcula marismortui (strain ATCC 43049 / DSM 3752 / JCM 8966 / VKM B-1809) (Halobacterium marismortui)).